The sequence spans 353 residues: MSGNTLGTLFCVTNFGESHGPAIGCVVDGCPPGLPLEAADIQAELDRRRPGTSRHVTQRQEADQVEILSGVYEGVTTGTPIGLLIRNTDARSKDYSNIADTFRPGHADFAYWRKYGVRDPRGGGRSSARLTAPTVAAGAIAKKWLAGQFGVRVRGYMSQLGPIAIPFSSWDDVPGNAFYAPNAAVVPELEAYMDQLRRDGDSVGARIEVVAEGLPAGWGEPIYDRLDADIAHAMMGLNAVKGVSLGAGFESIAQRGSEHGGEITPEGFASNHAGGVLGGISTGQPITVSLAIKPTSSIRVERRSVNRAGEPVMVQTLGRHDPCVGIRATPIAEALLALVLIDHALRQRAQCGG.

Arg-48 and Arg-54 together coordinate NADP(+). FMN is bound by residues 125-127, 238-239, Gly-278, 293-297, and Arg-319; these read RSS, NA, and KPTSS.

This sequence belongs to the chorismate synthase family. In terms of assembly, homotetramer. FMNH2 serves as cofactor.

The catalysed reaction is 5-O-(1-carboxyvinyl)-3-phosphoshikimate = chorismate + phosphate. It participates in metabolic intermediate biosynthesis; chorismate biosynthesis; chorismate from D-erythrose 4-phosphate and phosphoenolpyruvate: step 7/7. Functionally, catalyzes the anti-1,4-elimination of the C-3 phosphate and the C-6 proR hydrogen from 5-enolpyruvylshikimate-3-phosphate (EPSP) to yield chorismate, which is the branch point compound that serves as the starting substrate for the three terminal pathways of aromatic amino acid biosynthesis. This reaction introduces a second double bond into the aromatic ring system. The polypeptide is Chorismate synthase (Bordetella parapertussis (strain 12822 / ATCC BAA-587 / NCTC 13253)).